A 154-amino-acid chain; its full sequence is Major allergen Api g 1, isoallergen 1 (154 aa).

This sequence belongs to the BetVI family.

This is Major allergen Api g 1, isoallergen 1 from Apium graveolens (Celery).